A 159-amino-acid chain; its full sequence is Eukaryotic translation initiation factor 5A-2 (159 aa).

Basic and acidic residues predominate over residues 1–10; sequence MSDEEHHFEP. Positions 1–21 are disordered; it reads MSDEEHHFEPAADAGASKTYP. Lysine 52 carries the hypusine modification.

It belongs to the eIF-5A family. In terms of processing, lys-52 undergoes hypusination, a unique post-translational modification that consists in the addition of a butylamino group from spermidine to lysine side chain, leading to the formation of the unusual amino acid hypusine. eIF-5As are the only known proteins to undergo this modification, which is essential for their function.

In terms of biological role, translation factor that promotes translation elongation and termination, particularly upon ribosome stalling at specific amino acid sequence contexts. Binds between the exit (E) and peptidyl (P) site of the ribosome and promotes rescue of stalled ribosome: specifically required for efficient translation of polyproline-containing peptides as well as other motifs that stall the ribosome. Acts as a ribosome quality control (RQC) cofactor by joining the RQC complex to facilitate peptidyl transfer during CAT tailing step. The polypeptide is Eukaryotic translation initiation factor 5A-2 (Medicago sativa (Alfalfa)).